Reading from the N-terminus, the 79-residue chain is Calcium/calmodulin-dependent protein kinase II inhibitor 2 (79 aa).

The interval 43–69 (KRPPKLGQIGRAKRVVIEDDRIDEVLK) is inhibitory domain.

This sequence belongs to the CAMK2N family.

The protein localises to the nucleus. It is found in the cytoplasm. The protein resides in the cytosol. Functionally, potent and specific cellular inhibitor of CaM-kinase II (CAMK2). Traps Ca(2+)/calmodulin on CAMK2. The chain is Calcium/calmodulin-dependent protein kinase II inhibitor 2 (camk2n2) from Xenopus laevis (African clawed frog).